The chain runs to 191 residues: Protein GrpE (191 aa).

The protein belongs to the GrpE family. As to quaternary structure, homodimer.

Its subcellular location is the cytoplasm. In terms of biological role, participates actively in the response to hyperosmotic and heat shock by preventing the aggregation of stress-denatured proteins, in association with DnaK and GrpE. It is the nucleotide exchange factor for DnaK and may function as a thermosensor. Unfolded proteins bind initially to DnaJ; upon interaction with the DnaJ-bound protein, DnaK hydrolyzes its bound ATP, resulting in the formation of a stable complex. GrpE releases ADP from DnaK; ATP binding to DnaK triggers the release of the substrate protein, thus completing the reaction cycle. Several rounds of ATP-dependent interactions between DnaJ, DnaK and GrpE are required for fully efficient folding. This Listeria monocytogenes serotype 4b (strain CLIP80459) protein is Protein GrpE.